The sequence spans 361 residues: Ribosomal RNA large subunit methyltransferase M (361 aa).

Residues S187, 220–223, D239, D259, and D276 contribute to the S-adenosyl-L-methionine site; that span reads CPGG. Residue K305 is the Proton acceptor of the active site.

Belongs to the class I-like SAM-binding methyltransferase superfamily. RNA methyltransferase RlmE family. RlmM subfamily. As to quaternary structure, monomer.

It is found in the cytoplasm. It catalyses the reaction cytidine(2498) in 23S rRNA + S-adenosyl-L-methionine = 2'-O-methylcytidine(2498) in 23S rRNA + S-adenosyl-L-homocysteine + H(+). Catalyzes the 2'-O-methylation at nucleotide C2498 in 23S rRNA. This Shewanella baltica (strain OS185) protein is Ribosomal RNA large subunit methyltransferase M.